Reading from the N-terminus, the 160-residue chain is MAPK regulated corepressor interacting protein 2 (160 aa).

The residue at position 1 (M1) is an N-acetylmethionine. The interval 1-22 is disordered; the sequence is MYTITKGPSKLVAQRRTGPTQQ. R35 is subject to Omega-N-methylarginine. A disordered region spans residues 43–64; that stretch reads LPAHLQPSAQTQGPWPLASSGP. S61 is subject to Phosphoserine. R65 is subject to Omega-N-methylarginine. S82 carries the post-translational modification Phosphoserine.

Belongs to the MCRIP family. As to quaternary structure, interacts with DDX6. Interacts with MCRIP1.

It localises to the cytoplasm. The protein localises to the stress granule. It is found in the nucleus. This chain is MAPK regulated corepressor interacting protein 2 (Mcrip2), found in Mus musculus (Mouse).